The following is a 303-amino-acid chain: Coenzyme PQQ synthesis protein B (303 aa).

It belongs to the PqqB family.

Its pathway is cofactor biosynthesis; pyrroloquinoline quinone biosynthesis. May be involved in the transport of PQQ or its precursor to the periplasm. This Pseudomonas putida (strain GB-1) protein is Coenzyme PQQ synthesis protein B.